A 69-amino-acid polypeptide reads, in one-letter code: uncharacterized protein (69 aa).

Residues 22-48 are disordered; that stretch reads LFRKSRELSPIKPVRTPTPPAPTPPPM. Pro residues predominate over residues 37–48; sequence TPTPPAPTPPPM.

This is an uncharacterized protein from Lepidoptera (butterflies and moths).